Reading from the N-terminus, the 598-residue chain is Probable polysaccharide biosynthesis protein EpsC (598 aa).

4 helical membrane passes run 1-21 (MIIA…YQFL), 31-51 (GALL…AFLF), 63-83 (LGEL…TGVI), and 87-107 (VYHT…LLSI).

The protein belongs to the polysaccharide synthase family.

It localises to the cell membrane. Functionally, involved in biofilm formation. This chain is Probable polysaccharide biosynthesis protein EpsC (epsC), found in Bacillus subtilis (strain 168).